Reading from the N-terminus, the 283-residue chain is Acetylglutamate kinase (283 aa).

Residues 64 to 65 (GG), arginine 86, and asparagine 178 each bind substrate.

The protein belongs to the acetylglutamate kinase family. ArgB subfamily.

It localises to the cytoplasm. It carries out the reaction N-acetyl-L-glutamate + ATP = N-acetyl-L-glutamyl 5-phosphate + ADP. It participates in amino-acid biosynthesis; L-arginine biosynthesis; N(2)-acetyl-L-ornithine from L-glutamate: step 2/4. Functionally, catalyzes the ATP-dependent phosphorylation of N-acetyl-L-glutamate. The chain is Acetylglutamate kinase from Lactococcus lactis subsp. cremoris (strain MG1363).